An 83-amino-acid chain; its full sequence is RNA-binding protein Hfq (83 aa).

The Sm domain maps to 9–68 (DPFLNALRKERIPVSIYLVNGIKLQGQVESFDQFVILLKNTVSQMVYKHAISTVVPSRAL).

The protein belongs to the Hfq family. As to quaternary structure, homohexamer.

RNA chaperone that binds small regulatory RNA (sRNAs) and mRNAs to facilitate mRNA translational regulation in response to envelope stress, environmental stress and changes in metabolite concentrations. Also binds with high specificity to tRNAs. The protein is RNA-binding protein Hfq of Pseudoalteromonas atlantica (strain T6c / ATCC BAA-1087).